The sequence spans 204 residues: Casparian strip membrane protein 2 (204 aa).

The Cytoplasmic segment spans residues 1–42; sequence MKNESTTIDVPAESSSAMKGKAPLIGVARDHTTSGSGGYNRG. A helical transmembrane segment spans residues 43 to 63; sequence LSIFDFLLRLAAIVAALAAAA. The Extracellular portion of the chain corresponds to 64 to 92; sequence TMGTSDETLPFFTQFLQFEASYDDLPTFQ. A helical transmembrane segment spans residues 93–113; the sequence is FFVIAMALVGGYLVLSLPISV. The Cytoplasmic segment spans residues 114-125; that stretch reads VTILRPLATAPR. The helical transmembrane segment at 126 to 146 threads the bilayer; sequence LLLLVLDTAVLALNTAAASSA. Residues 147–178 lie on the Extracellular side of the membrane; it reads AAISYLAHSGNQNTNWLPICQQFGDFCQKSSG. Residues 179–199 form a helical membrane-spanning segment; sequence AVVSAFISVVFFTILVVISGV. Residues 200-204 lie on the Cytoplasmic side of the membrane; sequence ALKRH.

This sequence belongs to the Casparian strip membrane proteins (CASP) family. Homodimer and heterodimers.

The protein localises to the cell membrane. In terms of biological role, regulates membrane-cell wall junctions and localized cell wall deposition. Required for establishment of the Casparian strip membrane domain (CSD) and the subsequent formation of Casparian strips, a cell wall modification of the root endodermis that determines an apoplastic barrier between the intraorganismal apoplasm and the extraorganismal apoplasm and prevents lateral diffusion. This Arabidopsis lyrata subsp. lyrata (Lyre-leaved rock-cress) protein is Casparian strip membrane protein 2.